The primary structure comprises 238 residues: Monocyte to macrophage differentiation factor (238 aa).

The Cytoplasmic portion of the chain corresponds to 1–28 (MQFRNRFQRFMNHRAPANGRYKPTCYEH). The helical transmembrane segment at 29 to 49 (AANCYTHAFLIVPAIVGSALL) threads the bilayer. At 50–61 (HRLSDDCWEKIT) the chain is on the lumenal side. The chain crosses the membrane as a helical span at residues 62-82 (AWIYGMGLCALFIVSTVFHIV). The Cytoplasmic portion of the chain corresponds to 83 to 101 (SWKKSHLRTVEHCFHMCDR). The chain crosses the membrane as a helical span at residues 102 to 122 (MVIYFFIAASYAPWLNLRELG). A topological domain (lumenal) is located at residue Pro-123. The chain crosses the membrane as a helical span at residues 124-144 (LASHMRWFIWLMAAGGTIYVF). Over 145–151 (LYHEKYK) the chain is Cytoplasmic. A helical transmembrane segment spans residues 152–172 (VVELFFYLTMGFSPALVVTSM). Over 173 to 174 (NN) the chain is Lumenal. The chain crosses the membrane as a helical span at residues 175–195 (TDGLQELACGGLIYCLGVVFF). Residues 196–198 (KSD) lie on the Cytoplasmic side of the membrane. The chain crosses the membrane as a helical span at residues 199–219 (GIIPFAHAIWHLFVATAAAVH). At 220–238 (YYAIWKYLYRSPTDFIRHL) the chain is on the lumenal side.

Belongs to the ADIPOR family. Preferentially expressed in the brain.

It is found in the late endosome membrane. It localises to the lysosome membrane. Functionally, is involved in the dynamics of lysosomal membranes associated with microglial activation following brain lesion. The polypeptide is Monocyte to macrophage differentiation factor (Rattus norvegicus (Rat)).